An 88-amino-acid polypeptide reads, in one-letter code: MALKIRLKRMGMKKTPFYRLVVTEATSPRDGRFVEEIGYYDPTKNPVVLNIDEEKALNWLLKGATPTETTRALLSKAGVLKKFDEARK.

Belongs to the bacterial ribosomal protein bS16 family.

The chain is Small ribosomal subunit protein bS16 from Symbiobacterium thermophilum (strain DSM 24528 / JCM 14929 / IAM 14863 / T).